The primary structure comprises 353 residues: Holliday junction branch migration complex subunit RuvB (353 aa).

A large ATPase domain (RuvB-L) region spans residues 1–182; sequence MPERLITPKG…FGIVQRLEFY (182 aa). ATP is bound by residues Ile-21, Arg-22, Gly-63, Lys-66, Thr-67, Thr-68, 129–131, Arg-172, Tyr-182, and Arg-219; that span reads EDF. Residue Thr-67 participates in Mg(2+) binding. A small ATPAse domain (RuvB-S) region spans residues 183–253; sequence NVQDLTRIVQ…VADRALDLLD (71 aa). The interval 256 to 353 is head domain (RuvB-H); sequence VQGFDAQDRR…QEEGGGEGKL (98 aa). Residues Arg-292, Arg-311, and Arg-316 each contribute to the DNA site.

It belongs to the RuvB family. Homohexamer. Forms an RuvA(8)-RuvB(12)-Holliday junction (HJ) complex. HJ DNA is sandwiched between 2 RuvA tetramers; dsDNA enters through RuvA and exits via RuvB. An RuvB hexamer assembles on each DNA strand where it exits the tetramer. Each RuvB hexamer is contacted by two RuvA subunits (via domain III) on 2 adjacent RuvB subunits; this complex drives branch migration. In the full resolvosome a probable DNA-RuvA(4)-RuvB(12)-RuvC(2) complex forms which resolves the HJ.

It is found in the cytoplasm. It catalyses the reaction ATP + H2O = ADP + phosphate + H(+). Functionally, the RuvA-RuvB-RuvC complex processes Holliday junction (HJ) DNA during genetic recombination and DNA repair, while the RuvA-RuvB complex plays an important role in the rescue of blocked DNA replication forks via replication fork reversal (RFR). RuvA specifically binds to HJ cruciform DNA, conferring on it an open structure. The RuvB hexamer acts as an ATP-dependent pump, pulling dsDNA into and through the RuvAB complex. RuvB forms 2 homohexamers on either side of HJ DNA bound by 1 or 2 RuvA tetramers; 4 subunits per hexamer contact DNA at a time. Coordinated motions by a converter formed by DNA-disengaged RuvB subunits stimulates ATP hydrolysis and nucleotide exchange. Immobilization of the converter enables RuvB to convert the ATP-contained energy into a lever motion, pulling 2 nucleotides of DNA out of the RuvA tetramer per ATP hydrolyzed, thus driving DNA branch migration. The RuvB motors rotate together with the DNA substrate, which together with the progressing nucleotide cycle form the mechanistic basis for DNA recombination by continuous HJ branch migration. Branch migration allows RuvC to scan DNA until it finds its consensus sequence, where it cleaves and resolves cruciform DNA. The sequence is that of Holliday junction branch migration complex subunit RuvB from Thioalkalivibrio sulfidiphilus (strain HL-EbGR7).